A 302-amino-acid chain; its full sequence is Spermidine synthase (302 aa).

M1 carries the N-acetylmethionine modification. One can recognise a PABS domain in the interval 18 to 253 (EGWFRETCSL…GQIGFMLCSK (236 aa)). Q49 is an S-adenosyl 3-(methylsulfanyl)propylamine binding site. Y79 lines the putrescine pocket. Residues Q80, D104, E124, 155–156 (DG), and D173 each bind S-adenosyl 3-(methylsulfanyl)propylamine. Residue D173 is the Proton acceptor of the active site. Putrescine-binding positions include 173-176 (DSSD) and Y241.

It belongs to the spermidine/spermine synthase family. As to quaternary structure, homodimer or homotetramer.

The enzyme catalyses S-adenosyl 3-(methylsulfanyl)propylamine + putrescine = S-methyl-5'-thioadenosine + spermidine + H(+). Its pathway is amine and polyamine biosynthesis; spermidine biosynthesis; spermidine from putrescine: step 1/1. Its activity is regulated as follows. The activity is thought to be regulated mainly by the availability of decarboxylated S-adenosylmethionine. Its function is as follows. Catalyzes the production of spermidine from putrescine and decarboxylated S-adenosylmethionine (dcSAM). Has a strong preference for putrescine as substrate, and has very low activity towards 1,3-diaminopropane. Has extremely low activity towards spermidine. This chain is Spermidine synthase (SRM), found in Homo sapiens (Human).